The sequence spans 626 residues: (R)-linalool synthase 2, chloroplastic (626 aa).

The transit peptide at Met1 to Ser21 directs the protein to the chloroplast. The Mg(2+) site is built by Asp377, Asp381, and Glu529. The DDXXD motif motif lies at Asp377–Asp381.

It belongs to the terpene synthase family. Tpsd subfamily. Requires Mg(2+) as cofactor. The cofactor is Mn(2+).

Its subcellular location is the plastid. The protein localises to the chloroplast. The enzyme catalyses (2E)-geranyl diphosphate + H2O = (R)-linalool + diphosphate. It functions in the pathway terpene metabolism; oleoresin biosynthesis. Terpene synthase (mono-TPS) involved in the biosynthesis of monoterpene natural products included in conifer oleoresin secretions and volatile emissions; these compounds contribute to biotic and abiotic stress defense against herbivores and pathogens. Catalyzes the conversion of (2E)-geranyl diphosphate (GPP) to (R)-linalool. The protein is (R)-linalool synthase 2, chloroplastic of Picea sitchensis (Sitka spruce).